We begin with the raw amino-acid sequence, 272 residues long: Alcohol dehydrogenase-related 31 kDa protein (272 aa).

11–34 (YVADCGGIALETSKVLMTKNIAKL) is a binding site for NAD(+). Serine 139 lines the substrate pocket. Residue tyrosine 152 is the Proton acceptor of the active site.

It belongs to the short-chain dehydrogenases/reductases (SDR) family.

The chain is Alcohol dehydrogenase-related 31 kDa protein (Adhr) from Drosophila melanogaster (Fruit fly).